The chain runs to 205 residues: High frequency lysogenization protein HflD homolog (205 aa).

This sequence belongs to the HflD family.

The protein resides in the cytoplasm. The protein localises to the cell inner membrane. The sequence is that of High frequency lysogenization protein HflD homolog from Shewanella sp. (strain MR-4).